The primary structure comprises 119 residues: UPF0102 protein Sare_1228 (119 aa).

The protein belongs to the UPF0102 family.

This Salinispora arenicola (strain CNS-205) protein is UPF0102 protein Sare_1228.